We begin with the raw amino-acid sequence, 119 residues long: Large ribosomal subunit protein uL18 (119 aa).

Belongs to the universal ribosomal protein uL18 family. Part of the 50S ribosomal subunit; part of the 5S rRNA/L5/L18/L25 subcomplex. Contacts the 5S and 23S rRNAs.

Its function is as follows. This is one of the proteins that bind and probably mediate the attachment of the 5S RNA into the large ribosomal subunit, where it forms part of the central protuberance. The chain is Large ribosomal subunit protein uL18 from Nitratidesulfovibrio vulgaris (strain DSM 19637 / Miyazaki F) (Desulfovibrio vulgaris).